Here is a 391-residue protein sequence, read N- to C-terminus: Probable sugar efflux transporter (391 aa).

12 consecutive transmembrane segments (helical) span residues 16 to 36 (VFVF…PVAL), 51 to 71 (VGLM…PLML), 82 to 102 (LLFL…AWNF), 110 to 130 (MGIA…VIRV), 138 to 158 (QALG…LPLG), 170 to 190 (TFGV…KLLP), 210 to 230 (PLLV…FTTY), 247 to 267 (ITTL…FLFG), 277 to 297 (FIAF…VFKN), 300 to 320 (WVIF…TIAL), 338 to 358 (IFSG…SIVI), and 361 to 381 (LGLE…LFWL).

Belongs to the major facilitator superfamily. SotB (TC 2.A.1.2) family.

It is found in the cell inner membrane. Its function is as follows. Involved in the efflux of sugars. The physiological role may be the reduction of the intracellular concentration of toxic sugars or sugar metabolites. The sequence is that of Probable sugar efflux transporter from Helicobacter pylori (strain J99 / ATCC 700824) (Campylobacter pylori J99).